The primary structure comprises 627 residues: Threonine--tRNA ligase (627 aa).

The segment at 1–147 is editing domain; the sequence is MRMLLIHSDY…TIVPSGEAKA (147 aa). The catalytic stretch occupies residues 208-507; it reads PHVRIMLEQE…QSKGIKPMFP (300 aa). Positions 300, 352, and 476 each coordinate Zn(2+).

The protein belongs to the class-II aminoacyl-tRNA synthetase family. In terms of assembly, homodimer. Zn(2+) is required as a cofactor.

The protein localises to the cytoplasm. The enzyme catalyses tRNA(Thr) + L-threonine + ATP = L-threonyl-tRNA(Thr) + AMP + diphosphate + H(+). Its function is as follows. Catalyzes the attachment of threonine to tRNA(Thr) in a two-step reaction: L-threonine is first activated by ATP to form Thr-AMP and then transferred to the acceptor end of tRNA(Thr). Also edits incorrectly charged L-seryl-tRNA(Thr). The polypeptide is Threonine--tRNA ligase (Thermococcus onnurineus (strain NA1)).